We begin with the raw amino-acid sequence, 160 residues long: uncharacterized protein (160 aa).

A helical membrane pass occupies residues valine 27–tryptophan 47.

The protein resides in the membrane. This is an uncharacterized protein from Homo sapiens (Human).